We begin with the raw amino-acid sequence, 110 residues long: Quaternary ammonium compound-resistance protein QacF (110 aa).

The next 4 helical transmembrane spans lie at 1 to 21 (MKNW…TSAL), 31 to 51 (VPSV…SLAL), 58 to 78 (IAYA…AWIF), and 85 to 105 (FWAF…NLLS).

It belongs to the drug/metabolite transporter (DMT) superfamily. Small multidrug resistance (SMR) (TC 2.A.7.1) family.

The protein localises to the cell membrane. In terms of biological role, multidrug exporter. Is implicated for the resistance to bacteriocidal quaternary ammonium compounds. In Klebsiella aerogenes (Enterobacter aerogenes), this protein is Quaternary ammonium compound-resistance protein QacF (qacF).